The sequence spans 644 residues: Chaperone protein DnaK (644 aa).

At Thr-199 the chain carries Phosphothreonine; by autocatalysis. Positions 603–644 (YAKKSSEGQAAQGQTQSQESTKPAEEGVVDAEFEEVKEEDKK) are disordered. Polar residues predominate over residues 609–623 (EGQAAQGQTQSQEST). Residues 629–644 (GVVDAEFEEVKEEDKK) are compositionally biased toward acidic residues.

This sequence belongs to the heat shock protein 70 family.

In terms of biological role, acts as a chaperone. This is Chaperone protein DnaK from Legionella pneumophila (strain Corby).